Reading from the N-terminus, the 1481-residue chain is ABC multidrug transporter atrH (1481 aa).

Over residues 1–10 (MALPREERSL) the composition is skewed to basic and acidic residues. Disordered stretches follow at residues 1-45 (MALP…GIEQ) and 61-89 (ISQTNSGTEGLNPFLNTSDPELDPNSDQF). N19, N76, and N320 each carry an N-linked (GlcNAc...) asparagine glycan. The region spanning 134 to 396 (ATVSNVWLKA…FIEMGFDCPE (263 aa)) is the ABC transporter 1 domain. Residues 507-527 (MTLSTVIGNSILALIISSVFY) form a helical membrane-spanning segment. N-linked (GlcNAc...) asparagine glycosylation occurs at N530. Transmembrane regions (helical) follow at residues 542-562 (LLFFAILLNAFASALEMLTLW), 587-607 (LIVDLPAKAPVSIVFNLILYF), 616-636 (GHFFVFYLFSVTTTLTMSNVF), 650-670 (EVPASIFMMILMIYTGFTIPV), and 758-778 (FGILLGFLFFSLVAYIVASEL). The ABC transporter 2 domain maps to 838–1081 (FHWQDVCYDI…LIKYFEDKGS (244 aa)). Residue 874–881 (GVTGAGKT) coordinates ATP. Helical transmembrane passes span 1174–1194 (YIYAKAAMCIIPPLFIGFTFW), 1210–1230 (IFMLLVIFPNLVQQMMPYFAM), 1249–1269 (AFMLASIVVELPWNMLMAVPA), 1298–1318 (LLVLIFMLFTSTFSSMMIAGI), 1327–1347 (IAQLMFSMCLIFCGVLASPDV), and 1358–1378 (ASPFSYLVGSVLAVGIAGAPV). An N-linked (GlcNAc...) asparagine glycan is attached at N1395. A helical membrane pass occupies residues 1446 to 1466 (VGILFVYIVFNTVAAVFLYWL).

It belongs to the ABC transporter superfamily. ABCG family. PDR (TC 3.A.1.205) subfamily.

It is found in the cell membrane. In terms of biological role, pleiotropic ABC efflux transporter involved in the basal level of azole susceptibility. This chain is ABC multidrug transporter atrH, found in Aspergillus oryzae (strain ATCC 42149 / RIB 40) (Yellow koji mold).